We begin with the raw amino-acid sequence, 208 residues long: Protein-L-isoaspartate O-methyltransferase (208 aa).

The active site involves serine 59.

It belongs to the methyltransferase superfamily. L-isoaspartyl/D-aspartyl protein methyltransferase family.

It localises to the cytoplasm. It catalyses the reaction [protein]-L-isoaspartate + S-adenosyl-L-methionine = [protein]-L-isoaspartate alpha-methyl ester + S-adenosyl-L-homocysteine. Its function is as follows. Catalyzes the methyl esterification of L-isoaspartyl residues in peptides and proteins that result from spontaneous decomposition of normal L-aspartyl and L-asparaginyl residues. It plays a role in the repair and/or degradation of damaged proteins. The polypeptide is Protein-L-isoaspartate O-methyltransferase (Vibrio cholerae serotype O1 (strain ATCC 39541 / Classical Ogawa 395 / O395)).